The chain runs to 349 residues: tRNA pseudouridine synthase D (349 aa).

F26 is a binding site for substrate. D79 acts as the Nucleophile in catalysis. N128 serves as a coordination point for substrate. The TRUD domain maps to 154–302 (GVPNYFGSQR…VEGARRAILL (149 aa)). F328 is a binding site for substrate.

It belongs to the pseudouridine synthase TruD family.

The enzyme catalyses uridine(13) in tRNA = pseudouridine(13) in tRNA. Responsible for synthesis of pseudouridine from uracil-13 in transfer RNAs. The chain is tRNA pseudouridine synthase D from Yersinia enterocolitica serotype O:8 / biotype 1B (strain NCTC 13174 / 8081).